The sequence spans 454 residues: Phosphoglucosamine mutase (454 aa).

S101 (phosphoserine intermediate) is an active-site residue. Mg(2+) is bound by residues S101, D243, D245, and D247. S101 bears the Phosphoserine mark.

This sequence belongs to the phosphohexose mutase family. The cofactor is Mg(2+). In terms of processing, activated by phosphorylation.

The enzyme catalyses alpha-D-glucosamine 1-phosphate = D-glucosamine 6-phosphate. Catalyzes the conversion of glucosamine-6-phosphate to glucosamine-1-phosphate. This is Phosphoglucosamine mutase from Geotalea uraniireducens (strain Rf4) (Geobacter uraniireducens).